Reading from the N-terminus, the 426-residue chain is Mothers against decapentaplegic homolog 7 (426 aa).

The disordered stretch occupies residues 14-42; that stretch reads WRSRAPGGEDEEEGVGGGGGGGELRGEGA. N6-acetyllysine; alternate is present on residues lysine 64 and lysine 70. Glycyl lysine isopeptide (Lys-Gly) (interchain with G-Cter in ubiquitin); alternate cross-links involve residues lysine 64 and lysine 70. The MH1 domain maps to 64 to 207; it reads KAVRGAKGHH…LSRLCELESP (144 aa). Residues 67 to 76 show a composition bias toward basic residues; it reads RGAKGHHHPH. A disordered region spans residues 67 to 87; it reads RGAKGHHHPHPPTSGAGAAGG. Cysteine 125, cysteine 180, cysteine 192, and histidine 197 together coordinate Zn(2+). A PY-motif motif is present at residues 208 to 211; the sequence is PPPY. An important for interaction with SMURF2 region spans residues 208 to 217; sequence PPPYSRYPMD. A Phosphoserine modification is found at serine 249. In terms of domain architecture, MH2 spans 261-426; that stretch reads WCVVAYWEEK…CWLEVIFNSR (166 aa).

This sequence belongs to the dwarfin/SMAD family. In terms of assembly, interacts with COPS5. Interacts with STAMBP. Interacts with PPP1R15A. Interacts with NEDD4L. Interacts with RNF111, AXIN1 and AXIN2. Interacts with ACVR1B, SMURF1, SMURF2 and TGFBR1; SMAD7 recruits SMURF1 and SMURF2 to the TGF-beta receptor and regulates its degradation. Interacts with WWP1. Interacts with PDPK1 (via PH domain). Ubiquitinated by WWP1. Interacts with TSC22D1/TSC-22; the interaction requires TGF-beta and the interaction is inhibited by TGFBR1. Phosphorylation on Ser-249 does not affect its stability, nuclear localization or inhibitory function in TGFB signaling; however it affects its ability to regulate transcription. Phosphorylated by PDPK1. Post-translationally, ubiquitinated by WWP1. Polyubiquitinated by RNF111, which is enhanced by AXIN1 and promotes proteasomal degradation. In response to TGF-beta, ubiquitinated by SMURF1; which promotes its degradation. Ubiquitinated by ARK2C, promoting proteasomal degradation, leading to enhance the BMP-Smad signaling. In terms of processing, acetylation prevents ubiquitination and degradation mediated by SMURF1. In terms of tissue distribution, ubiquitous in various organs, with higher levels in brain and kidney.

The protein resides in the nucleus. It is found in the cytoplasm. Antagonist of signaling by TGF-beta (transforming growth factor) type 1 receptor superfamily members; has been shown to inhibit TGF-beta (Transforming growth factor) and activin signaling by associating with their receptors thus preventing SMAD2 access. Functions as an adapter to recruit SMURF2 to the TGF-beta receptor complex. Also acts by recruiting the PPP1R15A-PP1 complex to TGFBR1, which promotes its dephosphorylation. Positively regulates PDPK1 kinase activity by stimulating its dissociation from the 14-3-3 protein YWHAQ which acts as a negative regulator. In Mus musculus (Mouse), this protein is Mothers against decapentaplegic homolog 7 (Smad7).